Reading from the N-terminus, the 239-residue chain is Protein Thf1 (239 aa).

Positions 183–221 form a coiled coil; that stretch reads ERVRKDLELYRSSLDRMKQARAVVEEMVKAARRQQERRQ. A compositionally biased stretch (basic and acidic residues) spans 211–221; it reads KAARRQQERRQ. The disordered stretch occupies residues 211–239; sequence KAARRQQERRQSAASLPETSLGDPSKPGS.

The protein belongs to the THF1 family.

Functionally, may be involved in photosynthetic membrane biogenesis. This is Protein Thf1 from Synechococcus sp. (strain JA-2-3B'a(2-13)) (Cyanobacteria bacterium Yellowstone B-Prime).